Here is a 157-residue protein sequence, read N- to C-terminus: Large ribosomal subunit protein uL15 (157 aa).

The disordered stretch occupies residues 1 to 56; that stretch reads MRLEDIRPQPGSTRRRRRLGRGIAAGQGASCGKGMRGQKARKGGGPRPGFEGGQTP. Gly residues predominate over residues 23-35; it reads IAAGQGASCGKGM.

It belongs to the universal ribosomal protein uL15 family. Part of the 50S ribosomal subunit.

Its function is as follows. Binds to the 23S rRNA. In Synechococcus sp. (strain JA-3-3Ab) (Cyanobacteria bacterium Yellowstone A-Prime), this protein is Large ribosomal subunit protein uL15.